The sequence spans 640 residues: Choline O-acetyltransferase (640 aa).

Ser-17 carries the post-translational modification Phosphoserine. The active-site Proton acceptor is the His-334. Position 365 is a phosphoserine (Ser-365). Residues 412–424 (GKTF…YSPD), Ser-450, and Gln-551 each bind CoA. Positions 614-640 (CSSRQPADSKPPAPKEKARGPSQAKQS) are disordered.

The protein belongs to the carnitine/choline acetyltransferase family. As to quaternary structure, monomer.

It carries out the reaction choline + acetyl-CoA = acetylcholine + CoA. Its function is as follows. Catalyzes the reversible synthesis of acetylcholine (ACh) from acetyl CoA and choline at cholinergic synapses. This is Choline O-acetyltransferase (Chat) from Rattus norvegicus (Rat).